Here is a 150-residue protein sequence, read N- to C-terminus: Deoxyuridine 5'-triphosphate nucleotidohydrolase (150 aa).

Substrate is bound by residues 67–69 (RSS), asparagine 80, and 84–86 (VID).

It belongs to the dUTPase family. It depends on Mg(2+) as a cofactor.

It carries out the reaction dUTP + H2O = dUMP + diphosphate + H(+). It functions in the pathway pyrimidine metabolism; dUMP biosynthesis; dUMP from dCTP (dUTP route): step 2/2. Functionally, this enzyme is involved in nucleotide metabolism: it produces dUMP, the immediate precursor of thymidine nucleotides and it decreases the intracellular concentration of dUTP so that uracil cannot be incorporated into DNA. This is Deoxyuridine 5'-triphosphate nucleotidohydrolase (dut) from Lactococcus lactis subsp. lactis (strain IL1403) (Streptococcus lactis).